The primary structure comprises 445 residues: Bifunctional protein GlmU (445 aa).

Positions 1-218 are pyrophosphorylase; that stretch reads MRALVLAAGK…LLEITGVNTR (218 aa). UDP-N-acetyl-alpha-D-glucosamine contacts are provided by residues 6–9, lysine 20, glutamine 69, 74–75, 96–98, glycine 134, glutamate 147, asparagine 162, and asparagine 216; these read LAAG, GT, and YGD. Residue aspartate 98 coordinates Mg(2+). Asparagine 216 contacts Mg(2+). A linker region spans residues 219–239; sequence KTLVWLEEQLRMRKIEELLEN. The N-acetyltransferase stretch occupies residues 240-445; the sequence is GVTILDPATT…GWVLKKRKEE (206 aa). UDP-N-acetyl-alpha-D-glucosamine-binding residues include arginine 321 and lysine 339. The active-site Proton acceptor is the histidine 351. The UDP-N-acetyl-alpha-D-glucosamine site is built by tyrosine 354 and asparagine 365. Acetyl-CoA is bound by residues alanine 368, 374 to 375, serine 393, alanine 411, and arginine 428; that span reads NY.

The protein in the N-terminal section; belongs to the N-acetylglucosamine-1-phosphate uridyltransferase family. It in the C-terminal section; belongs to the transferase hexapeptide repeat family. Homotrimer. Mg(2+) is required as a cofactor.

It localises to the cytoplasm. The enzyme catalyses alpha-D-glucosamine 1-phosphate + acetyl-CoA = N-acetyl-alpha-D-glucosamine 1-phosphate + CoA + H(+). The catalysed reaction is N-acetyl-alpha-D-glucosamine 1-phosphate + UTP + H(+) = UDP-N-acetyl-alpha-D-glucosamine + diphosphate. The protein operates within nucleotide-sugar biosynthesis; UDP-N-acetyl-alpha-D-glucosamine biosynthesis; N-acetyl-alpha-D-glucosamine 1-phosphate from alpha-D-glucosamine 6-phosphate (route II): step 2/2. Its pathway is nucleotide-sugar biosynthesis; UDP-N-acetyl-alpha-D-glucosamine biosynthesis; UDP-N-acetyl-alpha-D-glucosamine from N-acetyl-alpha-D-glucosamine 1-phosphate: step 1/1. It functions in the pathway bacterial outer membrane biogenesis; LPS lipid A biosynthesis. In terms of biological role, catalyzes the last two sequential reactions in the de novo biosynthetic pathway for UDP-N-acetylglucosamine (UDP-GlcNAc). The C-terminal domain catalyzes the transfer of acetyl group from acetyl coenzyme A to glucosamine-1-phosphate (GlcN-1-P) to produce N-acetylglucosamine-1-phosphate (GlcNAc-1-P), which is converted into UDP-GlcNAc by the transfer of uridine 5-monophosphate (from uridine 5-triphosphate), a reaction catalyzed by the N-terminal domain. The chain is Bifunctional protein GlmU from Thermotoga sp. (strain RQ2).